Here is an 889-residue protein sequence, read N- to C-terminus: Valine--tRNA ligase (889 aa).

The 'HIGH' region motif lies at 50–60 (PNVTGKLHLGH). The 'KMSKS' region motif lies at 532–536 (KMSKS). K535 contacts ATP. The stretch at 816 to 889 (LAELVDLDEE…QRLVDIKAEA (74 aa)) forms a coiled coil.

This sequence belongs to the class-I aminoacyl-tRNA synthetase family. ValS type 1 subfamily. As to quaternary structure, monomer.

The protein resides in the cytoplasm. It carries out the reaction tRNA(Val) + L-valine + ATP = L-valyl-tRNA(Val) + AMP + diphosphate. Functionally, catalyzes the attachment of valine to tRNA(Val). As ValRS can inadvertently accommodate and process structurally similar amino acids such as threonine, to avoid such errors, it has a 'posttransfer' editing activity that hydrolyzes mischarged Thr-tRNA(Val) in a tRNA-dependent manner. This chain is Valine--tRNA ligase, found in Lactiplantibacillus plantarum (strain ATCC BAA-793 / NCIMB 8826 / WCFS1) (Lactobacillus plantarum).